We begin with the raw amino-acid sequence, 361 residues long: Free fatty acid receptor 4 (361 aa).

Positions 1-21 (MSPECAQTTGPGPSRTPDQVN) are disordered. Residues 1–45 (MSPECAQTTGPGPSRTPDQVNRTHFPFFSDVKGDHRLVLSVLETT) lie on the Extracellular side of the membrane. A glycan (N-linked (GlcNAc...) asparagine) is linked at Asn21. A helical transmembrane segment spans residues 46 to 66 (VLGLIFVVSLLGNVCALVLVV). Topologically, residues 67 to 77 (RRRRRGATVSL) are cytoplasmic. Residues 78–98 (VLNLFCADLLFTSAIPLVLVV) form a helical membrane-spanning segment. Over 99–103 (RWTEA) the chain is Extracellular. Residues 104–124 (WLLGPVVCHLLFYVMTMSGSV) traverse the membrane as a helical segment. A disulfide bridge connects residues Cys111 and Cys194. At 125-156 (TILTLAAVSLERMVCIVRLRRGLSGPGRRTQA) the chain is on the cytoplasmic side. The chain crosses the membrane as a helical span at residues 157-177 (ALLAFIWGYSALAALPLCILF). At 178 to 204 (RVVPQRLPGGDQEIPICTLDWPNRIGE) the chain is on the extracellular side. The helical transmembrane segment at 205–225 (ISWDVFFVTLNFLVPGLVIVI) threads the bilayer. The Cytoplasmic segment spans residues 226–268 (SYSKILQITKASRKRLTLSLAYSESHQIRVSQQDYRLFRTLFL). Residues 269–289 (LMVSFFIMWSPIIITILLILI) form a helical membrane-spanning segment. Topologically, residues 290–295 (QNFRQD) are extracellular. The chain crosses the membrane as a helical span at residues 296–316 (LVIWPSLFFWVVAFTFANSAL). The Cytoplasmic portion of the chain corresponds to 317-361 (NPILYNMSLFRSEWRKIFCCFFFPEKGAIFTETSIRRNDLSVIST). Residues Thr347 and Thr349 each carry the phosphothreonine modification. Ser350, Ser357, and Ser360 each carry phosphoserine.

This sequence belongs to the G-protein coupled receptor 1 family. As to quaternary structure, interacts (via C-terminus) with ARRB2 following LCFAs stimulation. In terms of processing, phosphorylated at two clusters of Ser and Thr residues located in the intracellular C-terminus. Prerequisite for FFAR4 internalization via an ARRB2-dependent pathway.

It localises to the cell membrane. The protein resides in the endosome membrane. The protein localises to the lysosome membrane. It is found in the cell projection. Its subcellular location is the cilium membrane. Functionally, G-protein-coupled receptor for long-chain fatty acids (LCFAs) with a major role in adipogenesis, energy metabolism and inflammation. Signals via G-protein and beta-arrestin pathways. LCFAs sensing initiates activation of phosphoinositidase C-linked G proteins GNAQ and GNA11 (G(q)/G(11)), inducing a variety of cellular responses via second messenger pathways such as intracellular calcium mobilization, modulation of cyclic adenosine monophosphate (cAMP) production, and mitogen-activated protein kinases (MAPKs). After LCFAs binding, associates with beta-arrestin ARRB2 that acts as an adapter protein coupling the receptor to specific downstream signaling pathways, as well as mediating receptor endocytosis. In response to dietary fats, plays an important role in the regulation of adipocyte proliferation and differentiation. Acts as a receptor for omega-3 polyunsaturated fatty acids (PUFAs) at primary cilium of perivascular preadipocytes, initiating an adipogenic program via cAMP and CTCF-dependent chromatin remodeling that ultimately results in transcriptional activation of adipogenic genes and cell cycle entry. Induces differentiation of brown and beige adipocytes probably via autocrine and endocrine functions of FGF21 hormone. Contributes to the thermogenic activation of brown adipose tissue and the browning of white adipose tissue. Activates brown adipocytes by initiating intracellular calcium signaling leading to mitochondrial depolarization and fission, and overall increased mitochondrial respiration. Consequently stimulates fatty acid uptake and oxidation in mitochondria together with UCP1-mediated thermogenic respiration, eventually reducing fat mass. Regulates bi-potential differentiation of bone marrow mesenchymal stem cells toward osteoblasts or adipocytes likely by up-regulating distinct integrins. In response to dietary fats regulates hormone secretion and appetite. Stimulates GIP and GLP1 secretion from enteroendocrine cells as well as GCG secretion in pancreatic alpha cells, thereby playing a role in the regulation of blood glucose levels. Negatively regulates glucose-induced SST secretion in pancreatic delta cells. Mediates LCFAs inhibition of GHRL secretion, an appetite-controlling hormone. In taste buds, contributes to sensing of dietary fatty acids by the gustatory system. During the inflammatory response, promotes anti-inflammatory M2 macrophage differentiation in adipose tissue. Mediates the anti-inflammatory effects of omega-3 PUFAs via inhibition of NLRP3 inflammasome activation. In this pathway, interacts with adapter protein ARRB2 and inhibits the priming step triggered by Toll-like receptors (TLRs) at the level of TAK1 and TAB1. Further inhibits the activation step when ARRB2 directly associates with NLRP3, leading to inhibition of pro-inflammatory cytokine release. Mediates LCFAs anti-apoptotic effects. The sequence is that of Free fatty acid receptor 4 (Ffar4) from Rattus norvegicus (Rat).